Reading from the N-terminus, the 242-residue chain is ATP-dependent dethiobiotin synthetase BioD (242 aa).

ATP is bound at residue 12 to 17 (EVGKTV). T16 is a binding site for Mg(2+). K37 is a catalytic residue. S41 contacts substrate. Residues D51 and 112–115 (EGAG) contribute to the ATP site. Mg(2+) is bound by residues D51 and E112.

Belongs to the dethiobiotin synthetase family. In terms of assembly, homodimer. Mg(2+) serves as cofactor.

The protein resides in the cytoplasm. The enzyme catalyses (7R,8S)-7,8-diammoniononanoate + CO2 + ATP = (4R,5S)-dethiobiotin + ADP + phosphate + 3 H(+). The protein operates within cofactor biosynthesis; biotin biosynthesis; biotin from 7,8-diaminononanoate: step 1/2. Its function is as follows. Catalyzes a mechanistically unusual reaction, the ATP-dependent insertion of CO2 between the N7 and N8 nitrogen atoms of 7,8-diaminopelargonic acid (DAPA, also called 7,8-diammoniononanoate) to form a ureido ring. This Bacillus thuringiensis subsp. konkukian (strain 97-27) protein is ATP-dependent dethiobiotin synthetase BioD.